The chain runs to 468 residues: 6-phospho-beta-galactosidase (468 aa).

D-galactose 6-phosphate-binding residues include Gln19, His116, Asn159, Glu160, and Asn297. Glu160 functions as the Proton donor in the catalytic mechanism. The active-site Nucleophile is the Glu375. Positions 428, 429, 435, and 437 each coordinate D-galactose 6-phosphate.

This sequence belongs to the glycosyl hydrolase 1 family.

It catalyses the reaction a 6-phospho-beta-D-galactoside + H2O = D-galactose 6-phosphate + an alcohol. Its pathway is carbohydrate metabolism; lactose degradation; D-galactose 6-phosphate and beta-D-glucose from lactose 6-phosphate: step 1/1. The chain is 6-phospho-beta-galactosidase from Streptococcus pyogenes serotype M6 (strain ATCC BAA-946 / MGAS10394).